Consider the following 294-residue polypeptide: 4-hydroxy-tetrahydrodipicolinate synthase (294 aa).

T45 serves as a coordination point for pyruvate. Y133 functions as the Proton donor/acceptor in the catalytic mechanism. K161 acts as the Schiff-base intermediate with substrate in catalysis. I203 provides a ligand contact to pyruvate.

The protein belongs to the DapA family. As to quaternary structure, homotetramer; dimer of dimers.

Its subcellular location is the cytoplasm. The enzyme catalyses L-aspartate 4-semialdehyde + pyruvate = (2S,4S)-4-hydroxy-2,3,4,5-tetrahydrodipicolinate + H2O + H(+). The protein operates within amino-acid biosynthesis; L-lysine biosynthesis via DAP pathway; (S)-tetrahydrodipicolinate from L-aspartate: step 3/4. Functionally, catalyzes the condensation of (S)-aspartate-beta-semialdehyde [(S)-ASA] and pyruvate to 4-hydroxy-tetrahydrodipicolinate (HTPA). The polypeptide is 4-hydroxy-tetrahydrodipicolinate synthase (Shewanella frigidimarina (strain NCIMB 400)).